The chain runs to 230 residues: Ribonuclease 3 (230 aa).

The 134-residue stretch at 1-134 (MKQLEELLST…FLGALLLDKG (134 aa)) folds into the RNase III domain. Glu-47 is a binding site for Mg(2+). Residue Asp-51 is part of the active site. Mg(2+) is bound by residues Asp-120 and Glu-123. Glu-123 is a catalytic residue. Residues 160–229 (DYKTCLQEFL…AKNALAQLSE (70 aa)) form the DRBM domain.

Belongs to the ribonuclease III family. As to quaternary structure, homodimer. It depends on Mg(2+) as a cofactor.

It is found in the cytoplasm. The enzyme catalyses Endonucleolytic cleavage to 5'-phosphomonoester.. Digests double-stranded RNA. Involved in the processing of primary rRNA transcript to yield the immediate precursors to the large and small rRNAs (23S and 16S). Processes some mRNAs, and tRNAs when they are encoded in the rRNA operon. Processes pre-crRNA and tracrRNA of type II CRISPR loci if present in the organism. The polypeptide is Ribonuclease 3 (Streptococcus pyogenes serotype M2 (strain MGAS10270)).